The primary structure comprises 984 residues: Glycine dehydrogenase (decarboxylating) (984 aa).

At lysine 702 the chain carries N6-(pyridoxal phosphate)lysine.

Belongs to the GcvP family. The glycine cleavage system is composed of four proteins: P, T, L and H. The cofactor is pyridoxal 5'-phosphate.

The catalysed reaction is N(6)-[(R)-lipoyl]-L-lysyl-[glycine-cleavage complex H protein] + glycine + H(+) = N(6)-[(R)-S(8)-aminomethyldihydrolipoyl]-L-lysyl-[glycine-cleavage complex H protein] + CO2. In terms of biological role, the glycine cleavage system catalyzes the degradation of glycine. The P protein binds the alpha-amino group of glycine through its pyridoxal phosphate cofactor; CO(2) is released and the remaining methylamine moiety is then transferred to the lipoamide cofactor of the H protein. The protein is Glycine dehydrogenase (decarboxylating) of Xanthomonas oryzae pv. oryzae (strain MAFF 311018).